Here is a 368-residue protein sequence, read N- to C-terminus: Peptide chain release factor 2 (368 aa).

An N5-methylglutamine modification is found at Gln-250.

Belongs to the prokaryotic/mitochondrial release factor family. Methylated by PrmC. Methylation increases the termination efficiency of RF2.

It is found in the cytoplasm. Peptide chain release factor 2 directs the termination of translation in response to the peptide chain termination codons UGA and UAA. The sequence is that of Peptide chain release factor 2 from Chlamydia trachomatis serovar L2 (strain ATCC VR-902B / DSM 19102 / 434/Bu).